A 421-amino-acid polypeptide reads, in one-letter code: Serine--tRNA ligase (421 aa).

230 to 232 is an L-serine binding site; it reads TAE. 259–261 serves as a coordination point for ATP; sequence RRE. Glu282 is an L-serine binding site. Residue 346 to 349 coordinates ATP; the sequence is EISS. An L-serine-binding site is contributed by Ser381.

It belongs to the class-II aminoacyl-tRNA synthetase family. Type-1 seryl-tRNA synthetase subfamily. Homodimer. The tRNA molecule binds across the dimer.

Its subcellular location is the cytoplasm. It carries out the reaction tRNA(Ser) + L-serine + ATP = L-seryl-tRNA(Ser) + AMP + diphosphate + H(+). The enzyme catalyses tRNA(Sec) + L-serine + ATP = L-seryl-tRNA(Sec) + AMP + diphosphate + H(+). The protein operates within aminoacyl-tRNA biosynthesis; selenocysteinyl-tRNA(Sec) biosynthesis; L-seryl-tRNA(Sec) from L-serine and tRNA(Sec): step 1/1. Its function is as follows. Catalyzes the attachment of serine to tRNA(Ser). Is also able to aminoacylate tRNA(Sec) with serine, to form the misacylated tRNA L-seryl-tRNA(Sec), which will be further converted into selenocysteinyl-tRNA(Sec). The protein is Serine--tRNA ligase of Acidithiobacillus ferrooxidans (strain ATCC 23270 / DSM 14882 / CIP 104768 / NCIMB 8455) (Ferrobacillus ferrooxidans (strain ATCC 23270)).